The chain runs to 375 residues: Negative elongation factor E (375 aa).

Positions 7-36 form a coiled coil; sequence GLSEEEEALQKKFNKLKKKKKALLALKKQS. The segment at 30-58 is disordered; that stretch reads LALKKQSSSGPASQGGVKRSLSEQPVVDT. Residue Ser-51 is modified to Phosphoserine. A Glycyl lysine isopeptide (Lys-Gly) (interchain with G-Cter in SUMO1); alternate cross-link involves residue Lys-78. A Glycyl lysine isopeptide (Lys-Gly) (interchain with G-Cter in SUMO2); alternate cross-link involves residue Lys-78. The disordered stretch occupies residues 79–262; that stretch reads AETKNSGFKR…SDSFPERRAP (184 aa). Lys-82 participates in a covalent cross-link: Glycyl lysine isopeptide (Lys-Gly) (interchain with G-Cter in SUMO2). The span at 90–101 shows a compositional bias: basic and acidic residues; that stretch reads RTLEGKLKDPEK. Ser-113 and Ser-115 each carry phosphoserine. Glu-122 is subject to PolyADP-ribosyl glutamic acid. Phosphoserine is present on residues Ser-131 and Ser-139. The residue at position 151 (Glu-151) is a PolyADP-ribosyl glutamic acid. Positions 155–167 are enriched in low complexity; the sequence is APGAGDGPPRGFD. At Glu-172 the chain carries PolyADP-ribosyl glutamic acid. Ser-179, Ser-181, Ser-185, and Ser-187 each carry phosphoserine. 4 tandem repeats follow at residues 184 to 185, 186 to 187, 188 to 189, and 190 to 191. Residues 184–247 are 32 X 2 AA approximate tandem repeats of R-[DSE]; it reads RSRSRDRSHD…RDRDRERDRE (64 aa). A compositionally biased stretch (basic and acidic residues) spans 186–260; the sequence is RSRDRSHDRS…RRSDSFPERR (75 aa). Ser-191 carries the post-translational modification Phosphoserine. Residues 192–193 form a 5; approximate repeat; sequence HD. 4 consecutive repeat copies span residues 194 to 195, 196 to 197, 198 to 199, and 200 to 201. The stretch at 202–203 is one 10; approximate repeat; that stretch reads KE. 7 repeat units span residues 204-205, 206-207, 208-209, 210-211, 212-213, 214-215, and 216-217. The stretch at 218-219 is one 18; approximate repeat; that stretch reads KD. A 19; approximate repeat occupies 220–221; sequence KD. 4 consecutive repeat copies span residues 222–223, 224–225, 226–227, and 228–229. A 24; approximate repeat occupies 230–231; sequence KE. 8 tandem repeats follow at residues 232–233, 234–235, 236–237, 238–239, 240–241, 242–243, 244–245, and 246–247. Phosphoserine is present on residues Ser-253 and Ser-255. Residues 266–336 enclose the RRM domain; sequence NTLYVYGEDM…VQLKVNIARK (71 aa). Residues Thr-276 and Thr-278 each carry the phosphothreonine modification. 2 positions are modified to phosphoserine: Ser-285 and Ser-357.

This sequence belongs to the RRM NELF-E family. As to quaternary structure, the NELF complex is composed of NELFA, NELFB, NELFCD and NELFE. Interacts with NELFB. Phosphorylated by the P-TEFb complex at sites next to its RNA recognition motif, promoting its release from chromatin. In terms of processing, sumoylated. Post-translationally, poly-ADP-ribosylated by PARP1, thereby preventing RNA-binding and relieving transcription pausing.

It localises to the nucleus. Its subcellular location is the chromosome. Functionally, essential component of the NELF complex, a complex that negatively regulates the elongation of transcription by RNA polymerase II. The NELF complex, which acts via an association with the DSIF complex and causes transcriptional pausing, is counteracted by the P-TEFb kinase complex. Provides the strongest RNA binding activity of the NELF complex and may initially recruit the NELF complex to RNA. In Mus musculus (Mouse), this protein is Negative elongation factor E (Nelfe).